The primary structure comprises 398 residues: Acetate kinase (398 aa).

N8 serves as a coordination point for Mg(2+). Position 15 (K15) interacts with ATP. R89 contributes to the substrate binding site. D146 serves as the catalytic Proton donor/acceptor. ATP-binding positions include 206-210 (HIGNG), 283-285 (DMR), and 331-335 (GMGEN). E383 contributes to the Mg(2+) binding site.

This sequence belongs to the acetokinase family. In terms of assembly, homodimer. The cofactor is Mg(2+). Mn(2+) serves as cofactor.

The protein resides in the cytoplasm. The catalysed reaction is acetate + ATP = acetyl phosphate + ADP. Its pathway is metabolic intermediate biosynthesis; acetyl-CoA biosynthesis; acetyl-CoA from acetate: step 1/2. Catalyzes the formation of acetyl phosphate from acetate and ATP. Can also catalyze the reverse reaction. In Streptococcus pyogenes serotype M28 (strain MGAS6180), this protein is Acetate kinase.